The sequence spans 337 residues: Ornithine carbamoyltransferase (337 aa).

Carbamoyl phosphate is bound by residues 57-60, Q84, R108, and 135-138; these read STRT and HPTQ. Residues N167, D231, and 235–236 contribute to the L-ornithine site; that span reads SM. Carbamoyl phosphate contacts are provided by residues 272-273 and R317; that span reads CL.

This sequence belongs to the aspartate/ornithine carbamoyltransferase superfamily. OTCase family.

The protein resides in the cytoplasm. The enzyme catalyses carbamoyl phosphate + L-ornithine = L-citrulline + phosphate + H(+). It participates in amino-acid degradation; L-arginine degradation via ADI pathway; carbamoyl phosphate from L-arginine: step 2/2. Functionally, reversibly catalyzes the transfer of the carbamoyl group from carbamoyl phosphate (CP) to the N(epsilon) atom of ornithine (ORN) to produce L-citrulline. This chain is Ornithine carbamoyltransferase, found in Streptococcus equi subsp. zooepidemicus (strain MGCS10565).